The sequence spans 82 residues: UPF0729 protein C18orf32 homolog (82 aa).

The necessary for its localzation to the endoplasmic reticulum and lipid droplets stretch occupies residues 1 to 37 (MVCIPCIVIPVLLWVYKKFLEPIVYPFISPIINRIWP). A disordered region spans residues 46–82 (TSAKKEESNGTCKASGTSITNGSVSRGEEAVPDKKTD). Polar residues predominate over residues 54–69 (NGTCKASGTSITNGSV). A compositionally biased stretch (basic and acidic residues) spans 71–82 (RGEEAVPDKKTD).

Belongs to the UPF0729 family.

Its subcellular location is the endoplasmic reticulum. It localises to the lipid droplet. The sequence is that of UPF0729 protein C18orf32 homolog from Xenopus tropicalis (Western clawed frog).